A 225-amino-acid chain; its full sequence is tRNA (guanine-N(1)-)-methyltransferase (225 aa).

S-adenosyl-L-methionine is bound by residues Gly112 and 132–137 (IGDYVL).

Belongs to the RNA methyltransferase TrmD family. Homodimer.

The protein localises to the cytoplasm. The catalysed reaction is guanosine(37) in tRNA + S-adenosyl-L-methionine = N(1)-methylguanosine(37) in tRNA + S-adenosyl-L-homocysteine + H(+). Its function is as follows. Specifically methylates guanosine-37 in various tRNAs. This is tRNA (guanine-N(1)-)-methyltransferase from Porphyromonas gingivalis (strain ATCC BAA-308 / W83).